We begin with the raw amino-acid sequence, 67 residues long: Conotoxin TsMMSK-B022 (67 aa).

Positions 1 to 22 (MMSKLGVLLTICLLLFPLTAVS) are cleaved as a signal peptide. Residues 23-50 (LDGDQPADLPELRAQDFAPERSPWFDPV) constitute a propeptide that is removed on maturation. Intrachain disulfides connect Cys53–Cys65, Cys54–Cys61, and Cys58–Cys64. Pro63 carries the post-translational modification 4-hydroxyproline.

It belongs to the conotoxin M superfamily. As to expression, expressed by the venom duct.

It localises to the secreted. This chain is Conotoxin TsMMSK-B022, found in Conus tessulatus (Tessellate cone).